The following is a 188-amino-acid chain: Putative manganese efflux pump MntP (188 aa).

The next 6 helical transmembrane spans lie at 1–21 (MLIQILLIGVSVSMDTFAVSI), 40–60 (LWFGGFQALFPLLGYFAASTF), 64–84 (VTAVDHWIIFGLLALIGGNMV), 105–127 (HMLPLAVACSIDAVAVGVSFAFM), 131–153 (IWLSVVIIGITTGLFSAAGLYIG), and 166–186 (IAGGVVLILIGLKVLFEHLGF).

Belongs to the MntP (TC 9.B.29) family.

The protein localises to the cell membrane. Its function is as follows. Probably functions as a manganese efflux pump. This chain is Putative manganese efflux pump MntP, found in Bifidobacterium adolescentis (strain ATCC 15703 / DSM 20083 / NCTC 11814 / E194a).